Reading from the N-terminus, the 39-residue chain is Cytochrome b559 subunit beta (39 aa).

Residues 14–30 (WLAVHGLAVPTVFFLGS) form a helical membrane-spanning segment. Histidine 18 is a heme binding site.

This sequence belongs to the PsbE/PsbF family. Heterodimer of an alpha subunit and a beta subunit. PSII is composed of 1 copy each of membrane proteins PsbA, PsbB, PsbC, PsbD, PsbE, PsbF, PsbH, PsbI, PsbJ, PsbK, PsbL, PsbM, PsbT, PsbX, PsbY, PsbZ, Psb30/Ycf12, at least 3 peripheral proteins of the oxygen-evolving complex and a large number of cofactors. It forms dimeric complexes. Heme b is required as a cofactor.

It localises to the plastid. It is found in the chloroplast thylakoid membrane. This b-type cytochrome is tightly associated with the reaction center of photosystem II (PSII). PSII is a light-driven water:plastoquinone oxidoreductase that uses light energy to abstract electrons from H(2)O, generating O(2) and a proton gradient subsequently used for ATP formation. It consists of a core antenna complex that captures photons, and an electron transfer chain that converts photonic excitation into a charge separation. The polypeptide is Cytochrome b559 subunit beta (Adiantum capillus-veneris (Maidenhair fern)).